Reading from the N-terminus, the 358-residue chain is NADH-quinone oxidoreductase subunit H (358 aa).

8 helical membrane passes run 30–50 (IVIG…MIFM), 96–116 (FLYN…FSCL), 129–149 (VGIF…LLAG), 165–185 (GAQM…IVIL), 201–221 (GWFL…YLIA), 264–284 (LFII…PLHI), 297–317 (IPGF…LMWI), and 336–356 (YLVP…VFKL).

Belongs to the complex I subunit 1 family. In terms of assembly, NDH-1 is composed of 14 different subunits. Subunits NuoA, H, J, K, L, M, N constitute the membrane sector of the complex.

The protein resides in the cell inner membrane. It catalyses the reaction a quinone + NADH + 5 H(+)(in) = a quinol + NAD(+) + 4 H(+)(out). Its function is as follows. NDH-1 shuttles electrons from NADH, via FMN and iron-sulfur (Fe-S) centers, to quinones in the respiratory chain. The immediate electron acceptor for the enzyme in this species is believed to be ubiquinone. Couples the redox reaction to proton translocation (for every two electrons transferred, four hydrogen ions are translocated across the cytoplasmic membrane), and thus conserves the redox energy in a proton gradient. This subunit may bind ubiquinone. The protein is NADH-quinone oxidoreductase subunit H of Phocaeicola vulgatus (strain ATCC 8482 / DSM 1447 / JCM 5826 / CCUG 4940 / NBRC 14291 / NCTC 11154) (Bacteroides vulgatus).